A 199-amino-acid polypeptide reads, in one-letter code: Octanoyltransferase (199 aa).

The BPL/LPL catalytic domain maps to 27-199 (SNSCDELWLL…FVQYFLTQFK (173 aa)). Residues 66–73 (RGGQVTYH), 133–135 (SIG), and 146–148 (GIA) each bind substrate. Cysteine 164 acts as the Acyl-thioester intermediate in catalysis.

Belongs to the LipB family.

It localises to the cytoplasm. It catalyses the reaction octanoyl-[ACP] + L-lysyl-[protein] = N(6)-octanoyl-L-lysyl-[protein] + holo-[ACP] + H(+). The protein operates within protein modification; protein lipoylation via endogenous pathway; protein N(6)-(lipoyl)lysine from octanoyl-[acyl-carrier-protein]: step 1/2. Its function is as follows. Catalyzes the transfer of endogenously produced octanoic acid from octanoyl-acyl-carrier-protein onto the lipoyl domains of lipoate-dependent enzymes. Lipoyl-ACP can also act as a substrate although octanoyl-ACP is likely to be the physiological substrate. This Legionella pneumophila (strain Paris) protein is Octanoyltransferase.